The chain runs to 343 residues: MTITPQEALQRTIEHREIFHDEMLHLMRLIMRGDMSPVMAAAIITGLRVKKETIGEIAAAATVMREFARRVEVEDNANFVDIVGTGGDGSHTFNISTATMFVAAAAGAKVAKHGNRGVSSKSGSADVLEALGVNIDLQPEQVAASIAETGMGFMFAPNHHPAMRNIAPVRRELGVRTIFNILGPLTNPADAPNQLMGVFHPDLVGIQVRVMQRLGAQHVLVVYGKDGMDEVSLGAATLVGELRDGEVREYEIHPEDFGMQMVSNRTLKVESADESRVMLLEALGNKPGVAREIVTLNAGTALYSADVAGSIADGIQLARDAIASGRAREKVDELVRFTQQFKR.

Residues glycine 84, 87–88 (GD), threonine 92, 94–97 (NIST), 112–120 (KHGNRGVSS), and serine 124 each bind 5-phospho-alpha-D-ribose 1-diphosphate. Glycine 84 provides a ligand contact to anthranilate. A Mg(2+)-binding site is contributed by serine 96. Position 115 (asparagine 115) interacts with anthranilate. Arginine 170 provides a ligand contact to anthranilate. The Mg(2+) site is built by aspartate 229 and glutamate 230.

This sequence belongs to the anthranilate phosphoribosyltransferase family. Homodimer. Requires Mg(2+) as cofactor.

It catalyses the reaction N-(5-phospho-beta-D-ribosyl)anthranilate + diphosphate = 5-phospho-alpha-D-ribose 1-diphosphate + anthranilate. Its pathway is amino-acid biosynthesis; L-tryptophan biosynthesis; L-tryptophan from chorismate: step 2/5. Its function is as follows. Catalyzes the transfer of the phosphoribosyl group of 5-phosphorylribose-1-pyrophosphate (PRPP) to anthranilate to yield N-(5'-phosphoribosyl)-anthranilate (PRA). In Burkholderia pseudomallei (strain 1106a), this protein is Anthranilate phosphoribosyltransferase.